We begin with the raw amino-acid sequence, 329 residues long: uncharacterized protein (329 aa).

In terms of domain architecture, Nudix hydrolase spans 27-185 (PRRASVAVII…IQIDSSRALK (159 aa)). A run of 3 helical transmembrane segments spans residues 123-143 (VITS…VFIL), 227-247 (PFLR…LSPS), and 303-323 (LTLL…FLII).

The protein localises to the membrane. This is an uncharacterized protein from Schizosaccharomyces pombe (strain 972 / ATCC 24843) (Fission yeast).